We begin with the raw amino-acid sequence, 365 residues long: MVILGSTGSIGTNTLEICSRHGVSVEALSCAKNIALLNEQIARFRPKFVCVADESLASEVKILKKSQIFVGAGGLLEMLEACHSQKVVNAIVGFAGLAPSLKTQELGKSLALANKESLVAGGKFLDTAKISPIDSEHFGLKFLLQNRTAPNRLIITASGGAFYRTPMKNLAKVTPSDALKHPNWSMGAKITIDSATMANKLFEVMEAFWLYGTSRIDALIEPTSMVHALVEFMDGSCTAHISRADMKLAIAHAVLENVSENVVAHADLLALKDIKFHKINLKKYPIFSLKEQVLERADLGVVINAANEVGVFAFLKGECRFLDISRIVLAAAKRFADVKIETKDEIFAIDAEVRNFTKRGLNAKI.

Residues Thr7, Gly8, Ser9, Ile10, Ala31, Lys32, Asn33, and Asn114 each coordinate NADPH. Residue Lys115 participates in 1-deoxy-D-xylulose 5-phosphate binding. Glu116 provides a ligand contact to NADPH. Asp134 lines the Mn(2+) pocket. Ser135, Glu136, Ser158, and His181 together coordinate 1-deoxy-D-xylulose 5-phosphate. Glu136 contacts Mn(2+). Gly187 serves as a coordination point for NADPH. 1-deoxy-D-xylulose 5-phosphate contacts are provided by Ser194, Asn199, Lys200, and Glu203. Glu203 lines the Mn(2+) pocket.

The protein belongs to the DXR family. The cofactor is Mg(2+). Mn(2+) is required as a cofactor.

The enzyme catalyses 2-C-methyl-D-erythritol 4-phosphate + NADP(+) = 1-deoxy-D-xylulose 5-phosphate + NADPH + H(+). Its pathway is isoprenoid biosynthesis; isopentenyl diphosphate biosynthesis via DXP pathway; isopentenyl diphosphate from 1-deoxy-D-xylulose 5-phosphate: step 1/6. In terms of biological role, catalyzes the NADPH-dependent rearrangement and reduction of 1-deoxy-D-xylulose-5-phosphate (DXP) to 2-C-methyl-D-erythritol 4-phosphate (MEP). This is 1-deoxy-D-xylulose 5-phosphate reductoisomerase from Campylobacter curvus (strain 525.92).